A 151-amino-acid polypeptide reads, in one-letter code: Small ribosomal subunit protein uS15 (151 aa).

Positions 1–20 (MGRMHSNGKGISGSSLPYNR) are disordered.

Belongs to the universal ribosomal protein uS15 family. As to quaternary structure, component of the small ribosomal subunit. Part of the small subunit (SSU) processome, composed of more than 70 proteins and the RNA chaperone small nucleolar RNA (snoRNA) U3.

The protein localises to the cytoplasm. The protein resides in the nucleus. It localises to the nucleolus. Its function is as follows. Component of the small ribosomal subunit. The ribosome is a large ribonucleoprotein complex responsible for the synthesis of proteins in the cell. Part of the small subunit (SSU) processome, first precursor of the small eukaryotic ribosomal subunit. During the assembly of the SSU processome in the nucleolus, many ribosome biogenesis factors, an RNA chaperone and ribosomal proteins associate with the nascent pre-rRNA and work in concert to generate RNA folding, modifications, rearrangements and cleavage as well as targeted degradation of pre-ribosomal RNA by the RNA exosome. The polypeptide is Small ribosomal subunit protein uS15 (rps13) (Dictyostelium discoideum (Social amoeba)).